The primary structure comprises 546 residues: MLVNTIRQKVSEVISKVYDSEIEFEIEIPPKKEFGDLSTNAAMKLAKTLKKNPREIAQEIVKSLDEDPSFDRIEIMGPGFINFFLSNELLRGVVKTVLERKDEYGRENTGNGVKIQFEYGSANPTGPFTVGHGRQIIIGDVLSEVFKELGYDVTREMYINDAGKQIKLLAQSLWARYNQLLGVEKEIPEGGYRGEYLVDIARDLVSEIGDKYKDLWNEEVEELFKQTALNRILSSMKDTLEKIGSSFDVYFSEKSLIEDGTVEEVLKLLKDRDVVYEKDGAVWLKVSAFIDEEDKVLVRSDGTYTYFMTDIAYHYKKYKRGFRKVYDIWGSDHHGHIPRMKAAMKALDIPDDFFNVILHQFVTLKRDDEIVRMSTRAGEFVTLDELLDEVGRDAVRYFFAMVDPNTHMVFDIDLAKAKSMDNPVYYVQYAHARIYNLFSNAEKKGVKFEEGKHLELLGNEEERVLMRNLGMFNTVLKEVAQMFAPNRLTNYLQSLAESFHAFYTKHVIVDPENPELSNARLNLALATGIVLRKGLKLIGVSAPERM.

A 'HIGH' region motif is present at residues 122–132 (ANPTGPFTVGH).

Belongs to the class-I aminoacyl-tRNA synthetase family. In terms of assembly, monomer.

Its subcellular location is the cytoplasm. It carries out the reaction tRNA(Arg) + L-arginine + ATP = L-arginyl-tRNA(Arg) + AMP + diphosphate. The sequence is that of Arginine--tRNA ligase from Thermotoga petrophila (strain ATCC BAA-488 / DSM 13995 / JCM 10881 / RKU-1).